A 216-amino-acid polypeptide reads, in one-letter code: Phosphorylated carbohydrates phosphatase TM_1254 (216 aa).

D7 (nucleophile) is an active-site residue.

The protein belongs to the HAD-like hydrolase superfamily. Requires Co(2+) as cofactor. Mg(2+) serves as cofactor. The cofactor is Mn(2+). It depends on Ni(2+) as a cofactor.

Its function is as follows. Displays high phosphatase activity toward erythrose 4-phosphate, fructose 6-phosphate, 2-deoxyglucose 6-phosphate, and mannose 6-phosphate. May have a role in the intracellular metabolism of many phosphorylated carbohydrates. This is Phosphorylated carbohydrates phosphatase TM_1254 from Thermotoga maritima (strain ATCC 43589 / DSM 3109 / JCM 10099 / NBRC 100826 / MSB8).